Here is a 454-residue protein sequence, read N- to C-terminus: Laccase-3 (454 aa).

2 Plastocyanin-like domains span residues 1–95 (PGPT…GPAT) and 101–252 (DLGV…YSGA). The N-linked (GlcNAc...) asparagine glycan is linked to asparagine 24. The Cu cation site is built by histidine 29, histidine 31, histidine 73, and histidine 75. Residues asparagine 138, asparagine 169, asparagine 218, asparagine 314, and asparagine 334 are each glycosylated (N-linked (GlcNAc...) asparagine). One can recognise a Plastocyanin-like 3 domain in the interval 319 to 454 (DVDWKKPILQ…SEGLAVQFQG (136 aa)). Cu cation-binding residues include histidine 375, histidine 378, and histidine 380. A glycan (N-linked (GlcNAc...) asparagine) is linked at asparagine 395. Cu cation contacts are provided by histidine 437, cysteine 438, histidine 439, and histidine 443.

The protein belongs to the multicopper oxidase family. The cofactor is Cu cation.

It localises to the secreted. The enzyme catalyses 4 hydroquinone + O2 = 4 benzosemiquinone + 2 H2O. Functionally, lignin degradation and detoxification of lignin-derived products. The chain is Laccase-3 (lcc3) from Botryotinia fuckeliana (Noble rot fungus).